A 562-amino-acid chain; its full sequence is Protein FAM222B (562 aa).

Low complexity-rich tracts occupy residues 155–167 (QQAL…LAHA) and 183–201 (ALSH…HPQP). 3 disordered regions span residues 155-203 (QQAL…QPMA), 219-245 (LQHP…VTVS), and 537-562 (AHRA…PGYR).

This sequence belongs to the FAM222 family.

The polypeptide is Protein FAM222B (FAM222B) (Homo sapiens (Human)).